The sequence spans 557 residues: Glutamine--tRNA ligase (557 aa).

A 'HIGH' region motif is present at residues 42–52 (PEPNGYLHIGH). ATP-binding positions include 43–45 (EPN) and 49–55 (HIGHAKS). Positions 75 and 220 each coordinate L-glutamine. ATP contacts are provided by residues Thr-239 and 270–271 (RL). Residues 277 to 281 (LTSKR) carry the 'KMSKS' region motif.

The protein belongs to the class-I aminoacyl-tRNA synthetase family. In terms of assembly, monomer.

It is found in the cytoplasm. It carries out the reaction tRNA(Gln) + L-glutamine + ATP = L-glutaminyl-tRNA(Gln) + AMP + diphosphate. The protein is Glutamine--tRNA ligase of Haemophilus influenzae (strain 86-028NP).